Here is a 727-residue protein sequence, read N- to C-terminus: Iron-sulfur clusters transporter atm1, mitochondrial (727 aa).

The tract at residues 46–97 (NSPLRKDASKEPALASNSKTTNPIPTQASASVNPPKDARNATTAKKDLLSET) is disordered. Polar residues predominate over residues 60–77 (ASNSKTTNPIPTQASASV). Positions 81–94 (KDARNATTAKKDLL) are enriched in basic and acidic residues. Residues 131–152 (VGTALSLLVGAKILNVEVPFYF) traverse the membrane as a helical segment. The 291-residue stretch at 131-421 (VGTALSLLVG…LGSVYRELRQ (291 aa)) folds into the ABC transmembrane type-1 domain. Over 153 to 175 (KSIVDSMNIDFATVGGTAYTVAG) the chain is Mitochondrial intermembrane. The chain crosses the membrane as a helical span at residues 176-199 (SMIIAYGVTRIGATLFQELRNAVF). The Mitochondrial matrix segment spans residues 200 to 248 (ASVAQKAIRRVARNVFEHLLRLDLNFHLSRQTGGLTRAIDRGTKGISFL). The helical transmembrane segment at 249–272 (LTSMVFHVVPTALEISLVCGILTY) threads the bilayer. A topological domain (mitochondrial intermembrane) is located at residue Q273. The chain crosses the membrane as a helical span at residues 274–294 (YGFQFAAITAATMVAYTAFTI). Residues 295-360 (TTTAWRTKFR…ASIKVTTSLA (66 aa)) lie on the Mitochondrial matrix side of the membrane. Glutathione contacts are provided by residues 300–304 (RTKFR) and 363–366 (NSGQ). The chain crosses the membrane as a helical span at residues 361–379 (FLNSGQNMIFSSALAAMMY). The Mitochondrial intermembrane segment spans residues 380 to 394 (LAANGVANGNLTVGD). The chain crosses the membrane as a helical span at residues 395 to 416 (LVMVNQLVFQLSVPLNFLGSVY). A glutathione-binding site is contributed by G413. Residues 417-727 (RELRQSLLDM…DMAPGPKAQQ (311 aa)) are Mitochondrial matrix-facing. The region spanning 456 to 692 (IRFENVTFGY…NGIYAELWNA (237 aa)) is the ABC transporter domain. Residues Y465 and 489 to 500 (GPSGCGKSTILR) contribute to the ATP site. Basic and acidic residues predominate over residues 702-719 (EFERETERDDVESKERDM). Positions 702-727 (EFERETERDDVESKERDMAPGPKAQQ) are disordered.

It belongs to the ABC transporter superfamily. ABCB family. Heavy Metal importer (TC 3.A.1.210) subfamily. Homodimer.

The protein localises to the mitochondrion inner membrane. Its function is as follows. Performs an essential function in the generation of cytoplasmic iron-sulfur proteins by mediating the ATP-dependent export of Fe/S cluster precursors synthesized by nfs1 and other mitochondrial proteins. Hydrolyzes ATP. Binds glutathione and may function by transporting a glutathione-conjugated iron-sulfur compound. In Aspergillus fumigatus (strain ATCC MYA-4609 / CBS 101355 / FGSC A1100 / Af293) (Neosartorya fumigata), this protein is Iron-sulfur clusters transporter atm1, mitochondrial.